A 365-amino-acid polypeptide reads, in one-letter code: Phosphate acyltransferase (365 aa).

This sequence belongs to the PlsX family. Homodimer. Probably interacts with PlsY.

The protein resides in the cytoplasm. The enzyme catalyses a fatty acyl-[ACP] + phosphate = an acyl phosphate + holo-[ACP]. It participates in lipid metabolism; phospholipid metabolism. In terms of biological role, catalyzes the reversible formation of acyl-phosphate (acyl-PO(4)) from acyl-[acyl-carrier-protein] (acyl-ACP). This enzyme utilizes acyl-ACP as fatty acyl donor, but not acyl-CoA. The chain is Phosphate acyltransferase from Picosynechococcus sp. (strain ATCC 27264 / PCC 7002 / PR-6) (Agmenellum quadruplicatum).